The chain runs to 379 residues: Chaperone protein DnaJ (379 aa).

The J domain maps to 7–72; the sequence is CYYETLEVER…DKRAAYDRYG (66 aa). A CR-type zinc finger spans residues 135-213; it reads GKTAQIEIPV…CTGSGRVTKE (79 aa). Residues C148, C151, C165, C168, C187, C190, C201, and C204 each contribute to the Zn(2+) site. CXXCXGXG motif repeat units lie at residues 148-155, 165-172, 187-194, and 201-208; these read CESCSGTG, CSTCGGAG, CPSCQGRG, and CPSCTGSG.

It belongs to the DnaJ family. As to quaternary structure, homodimer. The cofactor is Zn(2+).

It localises to the cytoplasm. Functionally, participates actively in the response to hyperosmotic and heat shock by preventing the aggregation of stress-denatured proteins and by disaggregating proteins, also in an autonomous, DnaK-independent fashion. Unfolded proteins bind initially to DnaJ; upon interaction with the DnaJ-bound protein, DnaK hydrolyzes its bound ATP, resulting in the formation of a stable complex. GrpE releases ADP from DnaK; ATP binding to DnaK triggers the release of the substrate protein, thus completing the reaction cycle. Several rounds of ATP-dependent interactions between DnaJ, DnaK and GrpE are required for fully efficient folding. Also involved, together with DnaK and GrpE, in the DNA replication of plasmids through activation of initiation proteins. This is Chaperone protein DnaJ from Rhodopseudomonas palustris (strain HaA2).